Here is a 197-residue protein sequence, read N- to C-terminus: Protein GrpE (197 aa).

Residues 1-27 are compositionally biased toward basic and acidic residues; it reads MSNKEQHIEKEEQLQEEKHEEQQKTEE. Residues 1–34 form a disordered region; it reads MSNKEQHIEKEEQLQEEKHEEQQKTEETEVEAVN.

Belongs to the GrpE family. Homodimer.

The protein resides in the cytoplasm. Its function is as follows. Participates actively in the response to hyperosmotic and heat shock by preventing the aggregation of stress-denatured proteins, in association with DnaK and GrpE. It is the nucleotide exchange factor for DnaK and may function as a thermosensor. Unfolded proteins bind initially to DnaJ; upon interaction with the DnaJ-bound protein, DnaK hydrolyzes its bound ATP, resulting in the formation of a stable complex. GrpE releases ADP from DnaK; ATP binding to DnaK triggers the release of the substrate protein, thus completing the reaction cycle. Several rounds of ATP-dependent interactions between DnaJ, DnaK and GrpE are required for fully efficient folding. In Pasteurella multocida (strain Pm70), this protein is Protein GrpE.